A 60-amino-acid chain; its full sequence is Large ribosomal subunit protein bL32 (60 aa).

A disordered region spans residues 1 to 60 (MAVQQVKKSRSKRDIRRSHDSLTNPTLSTDKSTGELHLRHHVSPNGFYKGRKVVDTKSED). Residues 7 to 16 (KKSRSKRDIR) show a composition bias toward basic residues. The segment covering 22 to 31 (LTNPTLSTDK) has biased composition (polar residues).

This sequence belongs to the bacterial ribosomal protein bL32 family.

This is Large ribosomal subunit protein bL32 from Francisella tularensis subsp. tularensis (strain SCHU S4 / Schu 4).